Reading from the N-terminus, the 264-residue chain is Thymidylate synthase 2 (264 aa).

Arg21 is a dUMP binding site. His51 serves as a coordination point for (6R)-5,10-methylene-5,6,7,8-tetrahydrofolate. 126 to 127 (RR) lines the dUMP pocket. Catalysis depends on Cys146, which acts as the Nucleophile. DUMP-binding positions include 166–169 (RSAD), Asn177, and 207–209 (HIY). Asp169 serves as a coordination point for (6R)-5,10-methylene-5,6,7,8-tetrahydrofolate. Ser263 is a binding site for (6R)-5,10-methylene-5,6,7,8-tetrahydrofolate.

The protein belongs to the thymidylate synthase family. Bacterial-type ThyA subfamily. Homodimer.

It is found in the cytoplasm. The catalysed reaction is dUMP + (6R)-5,10-methylene-5,6,7,8-tetrahydrofolate = 7,8-dihydrofolate + dTMP. The protein operates within pyrimidine metabolism; dTTP biosynthesis. Its function is as follows. Catalyzes the reductive methylation of 2'-deoxyuridine-5'-monophosphate (dUMP) to 2'-deoxythymidine-5'-monophosphate (dTMP) while utilizing 5,10-methylenetetrahydrofolate (mTHF) as the methyl donor and reductant in the reaction, yielding dihydrofolate (DHF) as a by-product. This enzymatic reaction provides an intracellular de novo source of dTMP, an essential precursor for DNA biosynthesis. The chain is Thymidylate synthase 2 from Bacillus amyloliquefaciens (Bacillus velezensis).